A 1220-amino-acid chain; its full sequence is Formin-F (1220 aa).

The span at 1 to 10 (MNRIFGRKKK) shows a compositional bias: basic residues. The tract at residues 1–62 (MNRIFGRKKK…TNSKSADKFD (62 aa)) is disordered. The 368-residue stretch at 6 to 373 (GRKKKDKDSD…QISVNKPMIG (368 aa)) folds into the GBD/FH3 domain. The span at 11–20 (DKDSDEKGST) shows a compositional bias: basic and acidic residues. Over residues 41 to 56 (AYSSLQPDGNNSTNSK) the composition is skewed to polar residues. Residues 392 to 428 (VALQSEFQKNIEELAKVKDQLKKANFDLNIANQELSS) adopt a coiled-coil conformation. Disordered regions lie at residues 461–659 (IDSN…KFTV), 711–732 (SQKK…GTVS), and 1049–1192 (DEAK…KKDI). Low complexity-rich tracts occupy residues 501–518 (SKPP…SSSQ) and 525–554 (SNLS…PQQQ). The FH1 domain maps to 532–655 (SDSLSNDFKS…NSNKPPANAP (124 aa)). Residues 555–564 (NIESTLTPEP) show a composition bias toward polar residues. Positions 575–638 (TTPPPAPPAP…GKGGPPPPPG (64 aa)) are enriched in pro residues. An FH2 domain is found at 656–1054 (KFTVSKPTTK…AIKRDEAKAK (399 aa)). Positions 711 to 722 (SQKKLEASDKKS) are enriched in basic and acidic residues. Residues 1032-1062 (YKDFQRDKEAAERAIKRDEAKAKKAQQLKRM) adopt a coiled-coil conformation. Residues 1066–1083 (IASSTNNKNPLASSSTSV) show a composition bias toward polar residues. The 76-residue stretch at 1083–1158 (VGDGGMVEDI…TPSKSGSRRE (76 aa)) folds into the DAD domain. Residues 1117-1142 (DSSSITTISEQSENSNTSSITITTPS) show a composition bias toward low complexity. A compositionally biased stretch (basic and acidic residues) spans 1161–1192 (TSKSSDKDKEKEKEKEKQCESTESEDINKKDI).

Belongs to the formin homology family. Diaphanous subfamily. Interacts (via GBD/FH3 domain) with activated Rho-GTPases.

Formins play an important role in the nucleation of actin and the formation of linear actin filaments. The polypeptide is Formin-F (forF) (Dictyostelium discoideum (Social amoeba)).